Reading from the N-terminus, the 171-residue chain is CS1 fimbrial subunit A (171 aa).

The N-terminal stretch at 1 to 23 is a signal peptide; it reads MKLKKTIGAMALATLFATMGASA.

The protein belongs to the fimbrial CS1 protein family.

Its subcellular location is the fimbrium. Its function is as follows. Fimbriae (also called pili), polar filaments radiating from the surface of the bacterium to a length of 0.5-1.5 micrometers and numbering 100-300 per cell, enable bacteria to colonize the epithelium of specific host organs. The protein is CS1 fimbrial subunit A (csoA) of Escherichia coli.